The sequence spans 199 residues: Holliday junction branch migration complex subunit RuvA (199 aa).

Positions 1-63 (MIAYIEGKLA…EDAHTLFGFA (63 aa)) are domain I. Residues 64–142 (DLMEKEMFLH…KDALLAGSDS (79 aa)) are domain II. A flexible linker region spans residues 143–151 (KQNFSVSHN). The domain III stretch occupies residues 151-199 (NSIRSEALTALITLGFTKTVAEKNLDLILKGNSNSFTLEDLIKQALKMS).

Belongs to the RuvA family. As to quaternary structure, homotetramer. Forms an RuvA(8)-RuvB(12)-Holliday junction (HJ) complex. HJ DNA is sandwiched between 2 RuvA tetramers; dsDNA enters through RuvA and exits via RuvB. An RuvB hexamer assembles on each DNA strand where it exits the tetramer. Each RuvB hexamer is contacted by two RuvA subunits (via domain III) on 2 adjacent RuvB subunits; this complex drives branch migration. In the full resolvosome a probable DNA-RuvA(4)-RuvB(12)-RuvC(2) complex forms which resolves the HJ.

The protein resides in the cytoplasm. The RuvA-RuvB-RuvC complex processes Holliday junction (HJ) DNA during genetic recombination and DNA repair, while the RuvA-RuvB complex plays an important role in the rescue of blocked DNA replication forks via replication fork reversal (RFR). RuvA specifically binds to HJ cruciform DNA, conferring on it an open structure. The RuvB hexamer acts as an ATP-dependent pump, pulling dsDNA into and through the RuvAB complex. HJ branch migration allows RuvC to scan DNA until it finds its consensus sequence, where it cleaves and resolves the cruciform DNA. The sequence is that of Holliday junction branch migration complex subunit RuvA from Cytophaga hutchinsonii (strain ATCC 33406 / DSM 1761 / CIP 103989 / NBRC 15051 / NCIMB 9469 / D465).